A 215-amino-acid chain; its full sequence is Probable phosphoglycerate mutase GpmB (215 aa).

Substrate contacts are provided by residues 8-15, 21-22, Arg58, 82-85, and 151-152; these read RHGETEWN, QG, ELDM, and GI. The Tele-phosphohistidine intermediate role is filled by His9. Glu82 acts as the Proton donor/acceptor in catalysis.

The protein belongs to the phosphoglycerate mutase family. GpmB subfamily.

It carries out the reaction (2R)-2-phosphoglycerate = (2R)-3-phosphoglycerate. It participates in carbohydrate degradation; glycolysis; pyruvate from D-glyceraldehyde 3-phosphate: step 3/5. The sequence is that of Probable phosphoglycerate mutase GpmB from Proteus mirabilis (strain HI4320).